The sequence spans 122 residues: U19-hexatoxin-Hi1a (122 aa).

An N-terminal signal peptide occupies residues 1-18; it reads MNTMIGFIVLLVSATVLG. The propeptide occupies 19–80; sequence DPELDALRKE…YENSNFREKR (62 aa). Cystine bridges form between Cys-81-Cys-96, Cys-88-Cys-101, and Cys-95-Cys-116.

As to expression, expressed by the venom gland.

The protein resides in the secreted. Its function is as follows. Probable ion channel inhibitor. This is U19-hexatoxin-Hi1a from Hadronyche infensa (Fraser island funnel-web spider).